Consider the following 96-residue polypeptide: MSSGGLLLLLGLLTLWAELTPISGQDRPKFCHLPVDSGICRAHIPRFYYNPASNQCQGFIYGGCEGNANNFETRDQCRHTCGASGKEGPRPRIASN.

The first 24 residues, 1 to 24, serve as a signal peptide directing secretion; it reads MSSGGLLLLLGLLTLWAELTPISG. Glutamine 25 is modified (pyrrolidone carboxylic acid). Residues 31–81 enclose the BPTI/Kunitz inhibitor domain; the sequence is CHLPVDSGICRAHIPRFYYNPASNQCQGFIYGGCEGNANNFETRDQCRHTC. Cystine bridges form between cysteine 31/cysteine 81, cysteine 40/cysteine 64, and cysteine 56/cysteine 77.

Belongs to the venom Kunitz-type family. In terms of tissue distribution, expressed by the venom gland.

The protein resides in the secreted. In terms of biological role, serine protease inhibitor. This Daboia russelii (Russel's viper) protein is Kunitz-type serine protease inhibitor 5.